A 487-amino-acid chain; its full sequence is Zinc finger protein 345 (487 aa).

15 consecutive C2H2-type zinc fingers follow at residues 62-84 (LECKECGKDFSFVSVLIRHQRIH), 90-112 (YECKECGKAFGSGANLAYHQRIH), 118-140 (YECNECGKAFGSGSNLTHHQRIH), 146-168 (YECKECGKAFSFGSGLIRHQIIH), 174-196 (YECKVCGKSFSFESALTRHHRIH), 202-224 (YECKDCGKAFGSGSNLTQHRRVH), 230-252 (YECKGCGMAFSSGSALTRHQRIH), 258-280 (YICNECGKAFSFGSALTRHQRIH), 286-308 (YVCKECGKAFNSGSDLTQHQRIH), 314-336 (YECKECEKAFRSGSKLIQHQRMH), 342-364 (YECKECGKAFSSGSDLTQHQRIH), 370-392 (YECKECGKAFASGSKLIQHQLIH), 398-420 (YECRECRKSFSSGSALNRHQRIH), 426-448 (YECKECEKTFGTGSTLTQHQRMH), and 454-476 (YECKACGKALGRGSEIQQHKKNH).

It belongs to the krueppel C2H2-type zinc-finger protein family.

It is found in the nucleus. Its function is as follows. May be involved in transcriptional regulation. This chain is Zinc finger protein 345 (ZNF345), found in Bos taurus (Bovine).